A 699-amino-acid chain; its full sequence is Polyribonucleotide nucleotidyltransferase (699 aa).

Mg(2+) is bound by residues Asp485 and Asp491. In terms of domain architecture, KH spans 552–611 (PRITVIKINPEKIRDVIGKGGAVIRALTEETGTTIELEDDGTVKIASSNGEATKEAIRRI). The 69-residue stretch at 621-689 (GRIYNGKVIR…RQGRVRLSIK (69 aa)) folds into the S1 motif domain.

This sequence belongs to the polyribonucleotide nucleotidyltransferase family. Component of the RNA degradosome, which is a multiprotein complex involved in RNA processing and mRNA degradation. Mg(2+) is required as a cofactor.

Its subcellular location is the cytoplasm. The catalysed reaction is RNA(n+1) + phosphate = RNA(n) + a ribonucleoside 5'-diphosphate. Functionally, involved in mRNA degradation. Catalyzes the phosphorolysis of single-stranded polyribonucleotides processively in the 3'- to 5'-direction. The polypeptide is Polyribonucleotide nucleotidyltransferase (Shewanella baltica (strain OS223)).